We begin with the raw amino-acid sequence, 272 residues long: Putative hydro-lyase RPD_1846 (272 aa).

Belongs to the D-glutamate cyclase family.

This is Putative hydro-lyase RPD_1846 from Rhodopseudomonas palustris (strain BisB5).